The following is a 188-amino-acid chain: Urease accessory protein UreE (188 aa).

The disordered stretch occupies residues 142 to 174; that stretch reads AYQSQAGAGHHHHHDHDHGHSHDHSHTHSHADS. A compositionally biased stretch (basic and acidic residues) spans 157-172; sequence HDHGHSHDHSHTHSHA.

This sequence belongs to the UreE family.

Its subcellular location is the cytoplasm. Its function is as follows. Involved in urease metallocenter assembly. Binds nickel. Probably functions as a nickel donor during metallocenter assembly. This Tolumonas auensis (strain DSM 9187 / NBRC 110442 / TA 4) protein is Urease accessory protein UreE.